Consider the following 228-residue polypeptide: Ribose-5-phosphate isomerase A (228 aa).

Substrate-binding positions include 29–32 (TGST), 84–87 (DGAD), and 97–100 (KGGG). Residue Glu-106 is the Proton acceptor of the active site. Lys-124 is a substrate binding site.

Belongs to the ribose 5-phosphate isomerase family. As to quaternary structure, homodimer.

The catalysed reaction is aldehydo-D-ribose 5-phosphate = D-ribulose 5-phosphate. It functions in the pathway carbohydrate degradation; pentose phosphate pathway; D-ribose 5-phosphate from D-ribulose 5-phosphate (non-oxidative stage): step 1/1. Its function is as follows. Catalyzes the reversible conversion of ribose-5-phosphate to ribulose 5-phosphate. The polypeptide is Ribose-5-phosphate isomerase A (Sphingopyxis alaskensis (strain DSM 13593 / LMG 18877 / RB2256) (Sphingomonas alaskensis)).